A 158-amino-acid polypeptide reads, in one-letter code: MFRIGQGFDVHQLVEGRPLIIGGITIPYEKGLLGHSDADVLLHTIADACLGAVGEGDIGKHFPDTDPEFKDADSFKLLRHVWMIVKEKGYTLGNLDCTIIAQKPKMAPYIEDMRARIAEGLEAEISQINVKATTTEKLGFTGRAEGIAAQASVLLQKV.

Residues D9 and H11 each coordinate a divalent metal cation. 4-CDP-2-C-methyl-D-erythritol 2-phosphate is bound by residues 9-11 and 35-36; these read DVH and HS. Position 43 (H43) interacts with a divalent metal cation. 4-CDP-2-C-methyl-D-erythritol 2-phosphate is bound by residues 57 to 59, 62 to 66, 101 to 107, 133 to 136, F140, and R143; these read DIG, FPDTD, AQKPKMA, and TTTE.

The protein belongs to the IspF family. Homotrimer. The cofactor is a divalent metal cation.

The enzyme catalyses 4-CDP-2-C-methyl-D-erythritol 2-phosphate = 2-C-methyl-D-erythritol 2,4-cyclic diphosphate + CMP. Its pathway is isoprenoid biosynthesis; isopentenyl diphosphate biosynthesis via DXP pathway; isopentenyl diphosphate from 1-deoxy-D-xylulose 5-phosphate: step 4/6. Its function is as follows. Involved in the biosynthesis of isopentenyl diphosphate (IPP) and dimethylallyl diphosphate (DMAPP), two major building blocks of isoprenoid compounds. Catalyzes the conversion of 4-diphosphocytidyl-2-C-methyl-D-erythritol 2-phosphate (CDP-ME2P) to 2-C-methyl-D-erythritol 2,4-cyclodiphosphate (ME-CPP) with a corresponding release of cytidine 5-monophosphate (CMP). The polypeptide is 2-C-methyl-D-erythritol 2,4-cyclodiphosphate synthase (Bacillus licheniformis (strain ATCC 14580 / DSM 13 / JCM 2505 / CCUG 7422 / NBRC 12200 / NCIMB 9375 / NCTC 10341 / NRRL NRS-1264 / Gibson 46)).